Here is a 249-residue protein sequence, read N- to C-terminus: Probable transcriptional regulatory protein A1S_1496 (249 aa).

Belongs to the TACO1 family.

The protein localises to the cytoplasm. This is Probable transcriptional regulatory protein A1S_1496 from Acinetobacter baumannii (strain ATCC 17978 / DSM 105126 / CIP 53.77 / LMG 1025 / NCDC KC755 / 5377).